The following is a 985-amino-acid chain: Pro-apoptotic serine protease NMA111 (985 aa).

The serine protease stretch occupies residues 79-269; that stretch reads VVSIHFSQVA…LPLDRVVRAL (191 aa). Residues H117, D148, and S231 each act as charge relay system in the active site. 2 PDZ domains span residues 287–385 and 771–847; these read WVLK…TVGD and PEEW…VRDA.

Belongs to the peptidase S1C family.

It localises to the nucleus. In terms of biological role, nuclear serine protease which mediates apoptosis. This is Pro-apoptotic serine protease NMA111 (NMA111) from Kluyveromyces lactis (strain ATCC 8585 / CBS 2359 / DSM 70799 / NBRC 1267 / NRRL Y-1140 / WM37) (Yeast).